Reading from the N-terminus, the 477-residue chain is UDP-N-acetylmuramate--L-alanine ligase (477 aa).

ATP is bound at residue 122–128 (GTHGKTT).

This sequence belongs to the MurCDEF family.

It localises to the cytoplasm. The catalysed reaction is UDP-N-acetyl-alpha-D-muramate + L-alanine + ATP = UDP-N-acetyl-alpha-D-muramoyl-L-alanine + ADP + phosphate + H(+). It functions in the pathway cell wall biogenesis; peptidoglycan biosynthesis. In terms of biological role, cell wall formation. In Xanthomonas oryzae pv. oryzae (strain MAFF 311018), this protein is UDP-N-acetylmuramate--L-alanine ligase.